Reading from the N-terminus, the 209-residue chain is Potassium-transporting ATPase KdpC subunit (209 aa).

The chain crosses the membrane as a helical span at residues 11-31; that stretch reads MILALTVLTGLAYPLAVTAVA. The tract at residues 188–209 is disordered; that stretch reads AQAPTPRQPEPGHPEPGRPEVR. Over residues 197–209 the composition is skewed to basic and acidic residues; the sequence is EPGHPEPGRPEVR.

It belongs to the KdpC family. As to quaternary structure, the system is composed of three essential subunits: KdpA, KdpB and KdpC.

It localises to the cell inner membrane. Functionally, part of the high-affinity ATP-driven potassium transport (or Kdp) system, which catalyzes the hydrolysis of ATP coupled with the electrogenic transport of potassium into the cytoplasm. This subunit acts as a catalytic chaperone that increases the ATP-binding affinity of the ATP-hydrolyzing subunit KdpB by the formation of a transient KdpB/KdpC/ATP ternary complex. This Rhodospirillum centenum (strain ATCC 51521 / SW) protein is Potassium-transporting ATPase KdpC subunit.